Consider the following 181-residue polypeptide: Large ribosomal subunit protein uL5 (181 aa).

It belongs to the universal ribosomal protein uL5 family. Part of the 50S ribosomal subunit; part of the 5S rRNA/L5/L18/L25 subcomplex. Contacts the 5S rRNA and the P site tRNA. Forms a bridge to the 30S subunit in the 70S ribosome.

In terms of biological role, this is one of the proteins that bind and probably mediate the attachment of the 5S RNA into the large ribosomal subunit, where it forms part of the central protuberance. In the 70S ribosome it contacts protein S13 of the 30S subunit (bridge B1b), connecting the 2 subunits; this bridge is implicated in subunit movement. Contacts the P site tRNA; the 5S rRNA and some of its associated proteins might help stabilize positioning of ribosome-bound tRNAs. This is Large ribosomal subunit protein uL5 from Sulfurimonas denitrificans (strain ATCC 33889 / DSM 1251) (Thiomicrospira denitrificans (strain ATCC 33889 / DSM 1251)).